A 496-amino-acid chain; its full sequence is ATP-dependent protease ATPase subunit HslU2 (496 aa).

A mitochondrion-targeting transit peptide spans Met1–Cys10. Residues Val51 and Gly94–Glu99 each bind ATP. Low complexity predominate over residues Gly177 to Ser191. Positions Gly177–Asn204 are disordered. Residues Asp308, Glu374, and Arg446 each contribute to the ATP site.

This sequence belongs to the ClpX chaperone family. HslU subfamily. A double ring-shaped homohexamer of HslV is capped on each side by a ring-shaped HslU homohexamer. The assembly of the HslU/HslV complex (HslVU) is dependent on binding of ATP.

The protein localises to the mitochondrion matrix. Its subcellular location is the kinetoplast. In terms of biological role, ATPase subunit of a proteasome-like degradation complex; this subunit has chaperone activity. The binding of ATP and its subsequent hydrolysis by HslU are essential for unfolding of protein substrates subsequently hydrolyzed by HslV. HslU recognizes the N-terminal part of its protein substrates and unfolds these before they are guided to HslV for hydrolysis. The HslVU protease complex functions in mitochondrial DNA replication by regulating DNA helicase PIF2 protein levels. This Trypanosoma brucei brucei (strain 927/4 GUTat10.1) protein is ATP-dependent protease ATPase subunit HslU2 (HslU2).